The following is a 158-amino-acid chain: Transcriptional repressor NrdR (158 aa).

The segment at 3 to 34 (CPYCGYPDSKVIDSRPTDDNTSIRRRRECLKC) is a zinc-finger region. Residues 49–139 (ILVIKKDNRR…VYRQFKDINT (91 aa)) enclose the ATP-cone domain.

This sequence belongs to the NrdR family. Zn(2+) is required as a cofactor.

In terms of biological role, negatively regulates transcription of bacterial ribonucleotide reductase nrd genes and operons by binding to NrdR-boxes. The sequence is that of Transcriptional repressor NrdR from Thermoanaerobacter sp. (strain X514).